The following is a 490-amino-acid chain: Acetyl-coenzyme A carboxylase carboxyl transferase subunit beta, chloroplastic (490 aa).

The CoA carboxyltransferase N-terminal domain maps to 221–490 (LWVQCENCYG…PLNQKSSKIK (270 aa)). Residues cysteine 225, cysteine 228, cysteine 244, and cysteine 247 each coordinate Zn(2+). The C4-type zinc-finger motif lies at 225–247 (CENCYGLNYKKFLKSKMNICEQC).

Belongs to the AccD/PCCB family. Acetyl-CoA carboxylase is a heterohexamer composed of biotin carboxyl carrier protein, biotin carboxylase and 2 subunits each of ACCase subunit alpha and ACCase plastid-coded subunit beta (accD). The cofactor is Zn(2+). As to expression, expressed in leaves, ripening and mature fruit.

Its subcellular location is the plastid. The protein localises to the chloroplast stroma. The protein resides in the chromoplast stroma. It catalyses the reaction N(6)-carboxybiotinyl-L-lysyl-[protein] + acetyl-CoA = N(6)-biotinyl-L-lysyl-[protein] + malonyl-CoA. It functions in the pathway lipid metabolism; malonyl-CoA biosynthesis; malonyl-CoA from acetyl-CoA: step 1/1. Functionally, component of the acetyl coenzyme A carboxylase (ACC) complex. Biotin carboxylase (BC) catalyzes the carboxylation of biotin on its carrier protein (BCCP) and then the CO(2) group is transferred by the transcarboxylase to acetyl-CoA to form malonyl-CoA. Is up-regulated upon chromoplast differentiation, presumably for fatty acid biosynthesis. The protein is Acetyl-coenzyme A carboxylase carboxyl transferase subunit beta, chloroplastic of Solanum lycopersicum (Tomato).